A 1035-amino-acid chain; its full sequence is Alpha-mannosidase B (1035 aa).

The signal sequence occupies residues M1–C20. 2 N-linked (GlcNAc...) asparagine glycosylation sites follow: N19 and N30. Positions 47 and 49 each coordinate Zn(2+). N63 carries N-linked (GlcNAc...) asparagine glycosylation. Zn(2+) is bound at residue D161. The active-site Nucleophile is the D161. Residues N245, N250, N270, N309, N327, and N438 are each glycosylated (N-linked (GlcNAc...) asparagine). H446 contacts Zn(2+). N-linked (GlcNAc...) asparagine glycans are attached at residues N487, N497, N503, N710, N719, N735, N792, N852, N863, N880, N962, and N993.

The protein belongs to the glycosyl hydrolase 38 family. Zn(2+) serves as cofactor.

Its subcellular location is the secreted. It catalyses the reaction Hydrolysis of terminal, non-reducing alpha-D-mannose residues in alpha-D-mannosides.. In Dictyostelium discoideum (Social amoeba), this protein is Alpha-mannosidase B (manB).